We begin with the raw amino-acid sequence, 241 residues long: Glutamate/aspartate import ATP-binding protein GltL (241 aa).

The ABC transporter domain maps to 2–236; sequence ITLKNVSKWY…PKSDRAKDFL (235 aa). Residue 34–41 coordinates ATP; it reads GPSGSGKS.

This sequence belongs to the ABC transporter superfamily. As to quaternary structure, the complex is composed of two ATP-binding proteins (GltL), two transmembrane proteins (GltJ and GltK) and a solute-binding protein (GltI).

The protein resides in the cell inner membrane. The catalysed reaction is a polar amino acid(out) + ATP + H2O = a polar amino acid(in) + ADP + phosphate + H(+). It carries out the reaction L-glutamate(out) + ATP + H2O = L-glutamate(in) + ADP + phosphate + H(+). The enzyme catalyses L-aspartate(out) + ATP + H2O = L-aspartate(in) + ADP + phosphate + H(+). Functionally, part of the ABC transporter complex GltIJKL involved in glutamate and aspartate uptake. Probably responsible for energy coupling to the transport system. In Escherichia coli O157:H7, this protein is Glutamate/aspartate import ATP-binding protein GltL (gltL).